The primary structure comprises 667 residues: YTH domain-containing protein ECT2 (667 aa).

Disordered regions lie at residues 264–305 (QRPV…PSSV) and 379–398 (NELN…GNLD). The segment covering 267-285 (VSGSGVASSYSKSSTVPSS) has biased composition (low complexity). Residues 286–305 (RNQNYRSNSHYTSVHQPSSV) show a composition bias toward polar residues. The 138-residue stretch at 442–579 (AMFFIIKSYS…EQGLKIVKIF (138 aa)) folds into the YTH domain. Residues 448 to 450 (KSY), Asp-454, 464 to 465 (WA), Asn-497, Trp-521, Trp-526, and Trp-534 each bind RNA. Positions 606 to 667 (KAKQTQKQVS…VTGDVVANGC (62 aa)) are disordered. Basic and acidic residues predominate over residues 614 to 627 (VSEEKVTDEKKESA). A compositionally biased stretch (low complexity) spans 628-639 (TAESASKESPAA).

In terms of assembly, interacts (via C-terminus) with CIPK1. Expressed in the shoot apex, at the sites of leaf formation, and in emerging leaves. Highly expressed in rapidly developing tissues.

It localises to the cytoplasm. It is found in the nucleus. Its function is as follows. Specifically recognizes and binds N6-methyladenosine (m6A)-containing RNAs, and regulates mRNA stability. M6A is a modification present at internal sites of mRNAs and some non-coding RNAs and plays a role in mRNA stability and processing. Binds preferentially in the 3'UTRs of target genes. May play dual roles in regulating 3'UTR processing in the nucleus and facilitating mRNA stability in the cytoplasm. Required for the correct timing of leaf formation and normal leaf morphology. Functions redundantly with ECT3. Required for proper trichome branching and morphology. Controls trichome morphology by binding transcripts related to trichome morphogenesis and affecting their stability. The polypeptide is YTH domain-containing protein ECT2 (Arabidopsis thaliana (Mouse-ear cress)).